A 71-amino-acid chain; its full sequence is Disintegrin applaggin (71 aa).

The 71-residue stretch at Glu1–His71 folds into the Disintegrin domain. Disulfide bonds link Cys6–Cys21, Cys8–Cys16, Cys15–Cys38, Cys29–Cys35, Cys34–Cys58, and Cys47–Cys65. Residues Arg50–Asp52 carry the Cell attachment site motif.

This sequence belongs to the venom metalloproteinase (M12B) family. P-II subfamily. P-IIa sub-subfamily. In terms of assembly, monomer (disintegrin). In terms of tissue distribution, expressed by the venom gland.

The protein localises to the secreted. In terms of biological role, inhibits fibrinogen interaction with platelets. Acts by binding to alpha-IIb/beta-3 (ITGA2B/ITGB3) on the platelet surface and inhibits aggregation induced by ADP, thrombin, platelet-activating factor and collagen. This is Disintegrin applaggin from Agkistrodon piscivorus piscivorus (Eastern cottonmouth).